A 323-amino-acid chain; its full sequence is Serine/threonine-protein phosphatase PP1-gamma catalytic subunit (323 aa).

Positions 64, 66, 92, and 124 each coordinate Mn(2+). Histidine 125 functions as the Proton donor in the catalytic mechanism. Positions 173 and 248 each coordinate Mn(2+). The disordered stretch occupies residues 300–323 (EKKKPNASRPVTPPRGMITKQAKK).

This sequence belongs to the PPP phosphatase family. PP-1 subfamily. As to quaternary structure, PP1 comprises a catalytic subunit, ppp1c1, ppp1cb or ppp1cc, which is folded into its native form by inhibitor 2 and glycogen synthetase kinase 3, and then is complexed to one or several targeting or regulatory subunits. The cofactor is Mn(2+).

It localises to the cytoplasm. Its subcellular location is the nucleus. It is found in the cleavage furrow. The protein resides in the nucleolus. The protein localises to the nucleoplasm. It localises to the chromosome. Its subcellular location is the centromere. It is found in the kinetochore. The protein resides in the nucleus speckle. The protein localises to the midbody. It localises to the mitochondrion. Its subcellular location is the cytoskeleton. It is found in the microtubule organizing center. It catalyses the reaction O-phospho-L-seryl-[protein] + H2O = L-seryl-[protein] + phosphate. The catalysed reaction is O-phospho-L-threonyl-[protein] + H2O = L-threonyl-[protein] + phosphate. Protein phosphatase 1 (PP1) is essential for cell division, and participates in the regulation of glycogen metabolism, muscle contractility and protein synthesis. Promotes nuclear envelope reassembly by targeting nuclear membrane vesicles to chromatin at the end of mitosis. Acts by dephosphorylating membrane proteins such as lamin B receptor (lbr) to regulate the binding of membrane proteins to chromatin. This is Serine/threonine-protein phosphatase PP1-gamma catalytic subunit from Xenopus tropicalis (Western clawed frog).